The following is a 288-amino-acid chain: N(1)-aminopropylagmatine ureohydrolase (288 aa).

Mn(2+)-binding residues include histidine 114, aspartate 133, histidine 135, aspartate 137, aspartate 213, and aspartate 215.

Belongs to the arginase family. Requires Mn(2+) as cofactor.

It is found in the cytoplasm. The catalysed reaction is N(1)-(3-aminopropyl)agmatine + H2O = urea + spermidine. It carries out the reaction agmatine + H2O = urea + putrescine. It functions in the pathway amine and polyamine biosynthesis; spermidine biosynthesis. Involved in the biosynthesis of polyamines which are thought to support the growth of thermophilic microorganisms under high-temperature conditions. It seems that long-chain and branched-chain of polyamines effectively stabilize DNA and RNA, respectively. Catalyzes the decarboxylation of N1-(3-aminopropyl)agmatine to yield spermidine and urea. It can also use agmatine to yield putrescine. The protein is N(1)-aminopropylagmatine ureohydrolase of Thermococcus kodakarensis (strain ATCC BAA-918 / JCM 12380 / KOD1) (Pyrococcus kodakaraensis (strain KOD1)).